Consider the following 387-residue polypeptide: Methylthioribose-1-phosphate isomerase (387 aa).

Aspartate 257 (proton donor) is an active-site residue.

The protein belongs to the eIF-2B alpha/beta/delta subunits family. MtnA subfamily.

It is found in the cytoplasm. It localises to the nucleus. The catalysed reaction is 5-(methylsulfanyl)-alpha-D-ribose 1-phosphate = 5-(methylsulfanyl)-D-ribulose 1-phosphate. Its pathway is amino-acid biosynthesis; L-methionine biosynthesis via salvage pathway; L-methionine from S-methyl-5-thio-alpha-D-ribose 1-phosphate: step 1/6. Its function is as follows. Catalyzes the interconversion of methylthioribose-1-phosphate (MTR-1-P) into methylthioribulose-1-phosphate (MTRu-1-P). This chain is Methylthioribose-1-phosphate isomerase (mri1), found in Neosartorya fischeri (strain ATCC 1020 / DSM 3700 / CBS 544.65 / FGSC A1164 / JCM 1740 / NRRL 181 / WB 181) (Aspergillus fischerianus).